A 320-amino-acid chain; its full sequence is N-acetylneuraminate lyase (320 aa).

Aceneuramate is bound by residues threonine 51 and threonine 52. Tyrosine 143 serves as the catalytic Proton donor. Catalysis depends on lysine 173, which acts as the Schiff-base intermediate with substrate. Residues serine 175, glycine 199, aspartate 201, glutamate 202, and serine 218 each coordinate aceneuramate.

The protein belongs to the DapA family. NanA subfamily. As to quaternary structure, homotetramer. Isoform 2 is expressed in placenta, liver, kidney, pancreas, spleen, thymus, ovary, small intestine and peripheral blood leukocyte.

The protein resides in the cytoplasm. It carries out the reaction aceneuramate = aldehydo-N-acetyl-D-mannosamine + pyruvate. The protein operates within amino-sugar metabolism; N-acetylneuraminate degradation. Its function is as follows. Catalyzes the cleavage of N-acetylneuraminic acid (sialic acid) to form pyruvate and N-acetylmannosamine via a Schiff base intermediate. It prevents sialic acids from being recycled and returning to the cell surface. Involved in the N-glycolylneuraminic acid (Neu5Gc) degradation pathway. Although human is not able to catalyze formation of Neu5Gc due to the inactive CMAHP enzyme, Neu5Gc is present in food and must be degraded. The chain is N-acetylneuraminate lyase from Homo sapiens (Human).